A 385-amino-acid chain; its full sequence is MPETEEISKGLEDVNIKWTRLTTIDGNKGILRYGGYSVEDIIASGAQDEEIQYLFLYGNLPTEQELRKYKETVQKGYKIPDFVINAIRQLPRESDAVAMQMAAVAAMAASETKFKWNKDTDRDVAAEMIGRMSAITVNVYRHIMNMPAELPKPSDSYAESFLNAAFGRKATKEEIDAMNTALILYTDHEVPASTTAGLVAVSTLSDMYSGITAALAALKGPLHGGAAEAAIAQFDEIKDPAMVEKWFNDNIINGKKRLMGFGHRVYKTYDPRAKIFKGIAEKLSSKKPEVHKVYEIATKLEDFGIKAFGSKGIYPNTDYFSGIVYMSIGFPLRNNIYTALFALSRVTGWQAHFIEYVEEQQRLIRPRAVYVGPAERKYVPIAERK.

Active-site residues include His-223, His-263, and Asp-318.

It belongs to the citrate synthase family. As to quaternary structure, homodimer.

The catalysed reaction is oxaloacetate + acetyl-CoA + H2O = citrate + CoA + H(+). It participates in carbohydrate metabolism; tricarboxylic acid cycle; isocitrate from oxaloacetate: step 1/2. Its activity is regulated as follows. Allosterically inhibited by NADH. The polypeptide is Citrate synthase (gltA) (Thermoplasma acidophilum (strain ATCC 25905 / DSM 1728 / JCM 9062 / NBRC 15155 / AMRC-C165)).